We begin with the raw amino-acid sequence, 403 residues long: S-adenosylmethionine synthase (403 aa).

Histidine 15 is a binding site for ATP. Position 17 (aspartate 17) interacts with Mg(2+). Residue glutamate 43 participates in K(+) binding. Positions 56 and 99 each coordinate L-methionine. The tract at residues 99-109 (QSPDINQGVDR) is flexible loop. ATP contacts are provided by residues 166–168 (DAK), 232–233 (KF), aspartate 241, 247–248 (RK), alanine 264, and lysine 268. Aspartate 241 is an L-methionine binding site. Lysine 272 contacts L-methionine.

This sequence belongs to the AdoMet synthase family. Homotetramer; dimer of dimers. Mg(2+) is required as a cofactor. It depends on K(+) as a cofactor.

It is found in the cytoplasm. It carries out the reaction L-methionine + ATP + H2O = S-adenosyl-L-methionine + phosphate + diphosphate. Its pathway is amino-acid biosynthesis; S-adenosyl-L-methionine biosynthesis; S-adenosyl-L-methionine from L-methionine: step 1/1. Its function is as follows. Catalyzes the formation of S-adenosylmethionine (AdoMet) from methionine and ATP. The overall synthetic reaction is composed of two sequential steps, AdoMet formation and the subsequent tripolyphosphate hydrolysis which occurs prior to release of AdoMet from the enzyme. The protein is S-adenosylmethionine synthase of Xylella fastidiosa (strain M12).